Reading from the N-terminus, the 235-residue chain is Urease accessory protein UreF (235 aa).

It belongs to the UreF family. As to quaternary structure, ureD, UreF and UreG form a complex that acts as a GTP-hydrolysis-dependent molecular chaperone, activating the urease apoprotein by helping to assemble the nickel containing metallocenter of UreC. The UreE protein probably delivers the nickel.

The protein resides in the cytoplasm. Its function is as follows. Required for maturation of urease via the functional incorporation of the urease nickel metallocenter. This is Urease accessory protein UreF from Ureaplasma parvum serovar 3 (strain ATCC 27815 / 27 / NCTC 11736).